The primary structure comprises 630 residues: 1-deoxy-D-xylulose-5-phosphate synthase (630 aa).

Residues H72 and 113-115 (GHS) contribute to the thiamine diphosphate site. D144 contacts Mg(2+). Residues 145 to 146 (GA), N173, Y284, and E367 each bind thiamine diphosphate. Residue N173 coordinates Mg(2+).

It belongs to the transketolase family. DXPS subfamily. Homodimer. Requires Mg(2+) as cofactor. Thiamine diphosphate serves as cofactor.

It catalyses the reaction D-glyceraldehyde 3-phosphate + pyruvate + H(+) = 1-deoxy-D-xylulose 5-phosphate + CO2. The protein operates within metabolic intermediate biosynthesis; 1-deoxy-D-xylulose 5-phosphate biosynthesis; 1-deoxy-D-xylulose 5-phosphate from D-glyceraldehyde 3-phosphate and pyruvate: step 1/1. Functionally, catalyzes the acyloin condensation reaction between C atoms 2 and 3 of pyruvate and glyceraldehyde 3-phosphate to yield 1-deoxy-D-xylulose-5-phosphate (DXP). The protein is 1-deoxy-D-xylulose-5-phosphate synthase of Bacillus cereus (strain AH820).